Here is a 133-residue protein sequence, read N- to C-terminus: MKNWLDEIKWDADGLVPAIAQDHKTGRVLMMAWMNREALELTAAENRAIYWSRSRGKLWRKGEESGHVQTLHEMRLDCDADVIILMVEQIGDIACHTGRQSCFYRVFENGDWKTVDPVLKDPHAIYSAGHKHE.

Aspartate 77 is a binding site for Mg(2+). Cysteine 78 is a binding site for Zn(2+). 2 residues coordinate Mg(2+): aspartate 79 and aspartate 81. Positions 95 and 102 each coordinate Zn(2+).

The protein belongs to the PRA-CH family. As to quaternary structure, homodimer. The cofactor is Mg(2+). Requires Zn(2+) as cofactor.

The protein localises to the cytoplasm. The enzyme catalyses 1-(5-phospho-beta-D-ribosyl)-5'-AMP + H2O = 1-(5-phospho-beta-D-ribosyl)-5-[(5-phospho-beta-D-ribosylamino)methylideneamino]imidazole-4-carboxamide. Its pathway is amino-acid biosynthesis; L-histidine biosynthesis; L-histidine from 5-phospho-alpha-D-ribose 1-diphosphate: step 3/9. Functionally, catalyzes the hydrolysis of the adenine ring of phosphoribosyl-AMP. The chain is Phosphoribosyl-AMP cyclohydrolase from Pseudomonas fluorescens (strain Pf0-1).